Consider the following 393-residue polypeptide: Lysine/ornithine decarboxylase (393 aa).

Lys-51 is subject to N6-(pyridoxal phosphate)lysine. Cys-323 serves as the catalytic Proton donor; shared with dimeric partner.

The protein belongs to the Orn/Lys/Arg decarboxylase class-II family. As to quaternary structure, homodimer. Pyridoxal 5'-phosphate is required as a cofactor.

The catalysed reaction is L-lysine + H(+) = cadaverine + CO2. The enzyme catalyses L-ornithine + H(+) = putrescine + CO2. Its pathway is amine and polyamine biosynthesis; putrescine biosynthesis via L-ornithine pathway; putrescine from L-ornithine: step 1/1. Inhibited competitively by both alpha-difluoromethyllysine and alpha-difluoromethylornithine. Its function is as follows. Decarboxylates both L-lysine and L-ornithine with similar catalytic efficiency. The chain is Lysine/ornithine decarboxylase (ldc) from Selenomonas ruminantium.